A 336-amino-acid chain; its full sequence is tRNA N6-adenosine threonylcarbamoyltransferase (336 aa).

2 residues coordinate Fe cation: His-111 and His-115. Substrate-binding positions include 134 to 138 (LVSGG), Asp-167, Gly-180, and Asn-270. Asp-298 is a binding site for Fe cation.

Belongs to the KAE1 / TsaD family. The cofactor is Fe(2+).

The protein localises to the cytoplasm. It catalyses the reaction L-threonylcarbamoyladenylate + adenosine(37) in tRNA = N(6)-L-threonylcarbamoyladenosine(37) in tRNA + AMP + H(+). In terms of biological role, required for the formation of a threonylcarbamoyl group on adenosine at position 37 (t(6)A37) in tRNAs that read codons beginning with adenine. Is involved in the transfer of the threonylcarbamoyl moiety of threonylcarbamoyl-AMP (TC-AMP) to the N6 group of A37, together with TsaE and TsaB. TsaD likely plays a direct catalytic role in this reaction. This is tRNA N6-adenosine threonylcarbamoyltransferase from Acinetobacter baumannii (strain AB307-0294).